A 119-amino-acid chain; its full sequence is Holo-[acyl-carrier-protein] synthase (119 aa).

Residues aspartate 8 and glutamate 58 each contribute to the Mg(2+) site.

Belongs to the P-Pant transferase superfamily. AcpS family. Mg(2+) is required as a cofactor.

It is found in the cytoplasm. The enzyme catalyses apo-[ACP] + CoA = holo-[ACP] + adenosine 3',5'-bisphosphate + H(+). Transfers the 4'-phosphopantetheine moiety from coenzyme A to a Ser of acyl-carrier-protein. The sequence is that of Holo-[acyl-carrier-protein] synthase from Limosilactobacillus fermentum (strain NBRC 3956 / LMG 18251) (Lactobacillus fermentum).